The following is a 662-amino-acid chain: Protein associated with UVRAG as autophagy enhancer (662 aa).

Disordered regions lie at residues 1–34 (MVSQ…RLLN) and 58–131 (DVQQ…SLSS). A compositionally biased stretch (low complexity) spans 58–71 (DVQQQPQDLQSQVP). The span at 100 to 113 (AETTLSEDTTDSVG) shows a compositional bias: polar residues. Low complexity predominate over residues 114 to 131 (SASPHGSSEKSSSFSLSS). Ser-157 carries the phosphoserine; by MTOR modification. Positions 196–235 (EVFVLPVDVEKENAHFYVADMIISAMEKMKCNILSQQQTE) are interaction with UVRAG. N6-acetyllysine is present on residues Lys-483, Lys-523, Lys-533, Lys-573, and Lys-633.

Interacts with UVRAG; the interaction is direct and promotes association with the PI3K/PI3KC3 and HOPS complexes. Interacts with STX17. Post-translationally, phosphorylated by MTOR at Ser-157 under nutrient-rich conditions. Phosphorylation prevents acetylation by KAT5/TIP60 and impairs RUBCNL/PACER function and autophagosome maturation. Under autophagy induction, Phosphorylation by MTOR is repressed, enabling acetylation by KAT5/TIP60. Acetylated by KAT5/TIP60 under autophagy induction, promoting autophagosome maturation and lipid metabolism. Acetylation is prevented by phosphorylation by MTOR. Lys-483 and Lys-573 constitute the key sites for tuning function in autophagy. Expressed weakly in cervical carcinoma cell lines.

It is found in the cytoplasmic vesicle. It localises to the autophagosome membrane. Its function is as follows. Regulator of autophagy that promotes autophagosome maturation by facilitating the biogenesis of phosphatidylinositol 3-phosphate (PtdIns(3)P) in late steps of autophagy. Acts by antagonizing RUBCN, thereby stimulating phosphatidylinositol 3-kinase activity of the PI3K/PI3KC3 complex. Following anchorage to the autophagosomal SNARE STX17, promotes the recruitment of PI3K/PI3KC3 and HOPS complexes to the autophagosome to regulate the fusion specificity of autophagosomes with late endosomes/lysosomes. Binds phosphoinositides phosphatidylinositol 3-phosphate (PtdIns(3)P), 4-phosphate (PtdIns(4)P) and 5-phosphate (PtdIns(5)P). In addition to its role in autophagy, acts as a regulator of lipid and glycogen homeostasis. May act as a tumor suppressor. The sequence is that of Protein associated with UVRAG as autophagy enhancer from Homo sapiens (Human).